We begin with the raw amino-acid sequence, 215 residues long: Large ribosomal subunit protein uL4c (215 aa).

Residues S48 to K57 show a composition bias toward polar residues. Residues S48–S85 are disordered. Basic residues predominate over residues G65–G76.

This sequence belongs to the universal ribosomal protein uL4 family. In terms of assembly, part of the 50S ribosomal subunit.

It localises to the plastid. The protein resides in the chloroplast. Its function is as follows. Probably binds the 23S rRNA. In Trieres chinensis (Marine centric diatom), this protein is Large ribosomal subunit protein uL4c (rpl4).